Consider the following 469-residue polypeptide: Uronate isomerase (469 aa).

The protein belongs to the metallo-dependent hydrolases superfamily. Uronate isomerase family.

It catalyses the reaction D-glucuronate = D-fructuronate. It carries out the reaction aldehydo-D-galacturonate = keto-D-tagaturonate. Its pathway is carbohydrate metabolism; pentose and glucuronate interconversion. In Pectobacterium carotovorum subsp. carotovorum (strain PC1), this protein is Uronate isomerase.